The primary structure comprises 543 residues: Sodium-dependent lysophosphatidylcholine symporter 1 (543 aa).

Positions 1-14 (MAKGEGAESGSAAG) are enriched in low complexity. The disordered stretch occupies residues 1–34 (MAKGEGAESGSAAGLLPTSILQSTERPAQVKKEP). At 1–40 (MAKGEGAESGSAAGLLPTSILQSTERPAQVKKEPKKKKQQ) the chain is on the cytoplasmic side. The helical transmembrane segment at 41-70 (LSVCNKLCYALGGAPYQVTGCALGFFLQIY) threads the bilayer. Residues 71–94 (LLDVAQKDEEVVFCFSSFQVGPFS) lie on the Extracellular side of the membrane. Residues 95-115 (ASIILFVGRAWDAITDPLVGL) traverse the membrane as a helical segment. At 116–127 (CISKSPWTCLGR) the chain is on the cytoplasmic side. A helical membrane pass occupies residues 128-147 (LMPWIIFSTPLAVIAYFLIW). At 148–157 (FVPDFPHGQT) the chain is on the extracellular side. Residues 158 to 182 (YWYLLFYCLFETMVTCFHVPYSALT) traverse the membrane as a helical segment. Residues 183 to 189 (MFISTEQ) are Cytoplasmic-facing. The helical transmembrane segment at 190–221 (TERDSATAYRMTVEVLGTVLGTAIQGQIVGQA) threads the bilayer. Topologically, residues 222-241 (DTPCFQDLNSSTVASQSANH) are extracellular. The cysteines at positions 225 and 473 are disulfide-linked. N-linked (GlcNAc...) asparagine glycans are attached at residues Asn-230 and Asn-240. Residues 242 to 275 (THGTTSHRETQKAYLLAAGVIVCIYIICAVILIL) traverse the membrane as a helical segment. At 276–306 (GVREQREPYEAQQSEPIAYFRGLRLVMSHGP) the chain is on the cytoplasmic side. Residues 307–333 (YIKLITGFLFTSLAFMLVEGNFVLFCT) traverse the membrane as a helical segment. Residues 334 to 344 (YTLGFRNEFQN) lie on the Extracellular side of the membrane. The chain crosses the membrane as a helical span at residues 345–363 (LLLAIMLSATLTIPIWQWF). Residues 364 to 367 (LTRF) lie on the Cytoplasmic side of the membrane. A helical transmembrane segment spans residues 368-389 (GKKTAVYVGISSAVPFLILVAL). Over 390-392 (MES) the chain is Extracellular. Residues 393 to 429 (NLIITYAVAVAAGISVAAAFLLPWSMLPDVIDDFHLK) traverse the membrane as a helical segment. Residues 430-439 (QPHFHGTEPI) are Cytoplasmic-facing. A helical membrane pass occupies residues 440-466 (FFSFYVFFTKFASGVSLGISTLSLDFA). At 467 to 478 (GYQTRGCSQPER) the chain is on the extracellular side. Residues 479–502 (VKFTLNMLVTMAPIVLILLGLLLF) traverse the membrane as a helical segment. Topologically, residues 503–543 (KMYPIDEERRRQNKKALQALRDEASSSGCSETDSTELASIL) are cytoplasmic.

The protein belongs to the major facilitator superfamily. In terms of assembly, interacts with ERVFRD-1/syncytin-2. In placenta, associated with trophoblast cells.

Its subcellular location is the cell membrane. The protein localises to the endoplasmic reticulum membrane. It catalyses the reaction a 1-acyl-sn-glycero-3-phosphocholine(in) + Na(+)(in) = a 1-acyl-sn-glycero-3-phosphocholine(out) + Na(+)(out). The catalysed reaction is 1-(4Z,7Z,10Z,13Z,16Z,19Z-docosahexaenoyl)-sn-glycero-3-phosphocholine(in) + Na(+)(in) = 1-(4Z,7Z,10Z,13Z,16Z,19Z-docosahexaenoyl)-sn-glycero-3-phosphocholine(out) + Na(+)(out). The enzyme catalyses 1-(9Z-octadecenoyl)-sn-glycero-3-phosphocholine(in) + Na(+)(in) = 1-(9Z-octadecenoyl)-sn-glycero-3-phosphocholine(out) + Na(+)(out). It carries out the reaction 1-hexadecanoyl-sn-glycero-3-phosphocholine(in) + Na(+)(in) = 1-hexadecanoyl-sn-glycero-3-phosphocholine(out) + Na(+)(out). It catalyses the reaction a 1-acyl-sn-glycero-3-phosphoethanolamine(in) + Na(+)(in) = a 1-acyl-sn-glycero-3-phosphoethanolamine(out) + Na(+)(out). In terms of biological role, sodium-dependent lysophosphatidylcholine (LPC) symporter, which plays an essential role for blood-brain barrier formation and function. Specifically expressed in endothelium of the blood-brain barrier of micro-vessels and transports LPC into the brain. Transport of LPC is essential because it constitutes the major mechanism by which docosahexaenoic acid (DHA), an omega-3 fatty acid that is essential for normal brain growth and cognitive function, enters the brain. Transports LPC carrying long-chain fatty acids such LPC oleate and LPC palmitate with a minimum acyl chain length of 14 carbons. Does not transport docosahexaenoic acid in unesterified fatty acid. Specifically required for blood-brain barrier formation and function, probably by mediating lipid transport. Not required for central nervous system vascular morphogenesis. Acts as a transporter for tunicamycin, an inhibitor of asparagine-linked glycosylation. In placenta, acts as a receptor for ERVFRD-1/syncytin-2 and is required for trophoblast fusion. This is Sodium-dependent lysophosphatidylcholine symporter 1 from Homo sapiens (Human).